A 733-amino-acid polypeptide reads, in one-letter code: ATP-dependent RNA helicase DBP7 (733 aa).

Disordered regions lie at residues 1-92 and 119-139; these read MDED…SKMI and SSQLKVTKESDEKTYLPSNAP. A compositionally biased stretch (polar residues) spans 17-30; sequence SVSSGSNKRTTSKV. Positions 52-80 are enriched in basic and acidic residues; sequence QKKDRSATGKDDGKKHENDESNDSKKRPT. The Q motif motif lies at 144-173; sequence STFEGLGINERLSKHLTETLRFKNPTKVQK. One can recognise a Helicase ATP-binding domain in the interval 177-372; sequence PTMLSTERDL…SIILNNPEMI (196 aa). 190-197 serves as a coordination point for ATP; that stretch reads AQTGSGKT. The DEAD box signature appears at 304-307; sequence DEGD. In terms of domain architecture, Helicase C-terminal spans 406 to 596; sequence TLSAILKKIS…NYENYLKDGF (191 aa). A disordered region spans residues 687–714; sequence KKLGKSVESNSGIQGASKKTKKEDPRKK.

The protein belongs to the DEAD box helicase family. DDX31/DBP7 subfamily.

The protein localises to the nucleus. It localises to the nucleolus. The catalysed reaction is ATP + H2O = ADP + phosphate + H(+). In terms of biological role, ATP-binding RNA helicase involved in the biogenesis of 60S ribosomal subunits and is required for the normal formation of 25S and 5.8S rRNAs. This Scheffersomyces stipitis (strain ATCC 58785 / CBS 6054 / NBRC 10063 / NRRL Y-11545) (Yeast) protein is ATP-dependent RNA helicase DBP7 (DPB7).